Consider the following 553-residue polypeptide: Cytochrome P450 monooxygenase alnD (553 aa).

Residues 351 to 371 (LVGAGFVTSSAFLSWLIYSLV) traverse the membrane as a helical segment. Residue cysteine 493 participates in heme binding. N-linked (GlcNAc...) asparagine glycosylation occurs at asparagine 518.

This sequence belongs to the cytochrome P450 family. It depends on heme as a cofactor.

It localises to the membrane. It participates in polyketide biosynthesis. Cytochrome P450 monooxygenase; part of the gene cluster that mediates the biosynthesis of asperlin, a polyketide showing anti-inflammatory, antitumor and antibiotic activities. The first step of the asperlin biosynthesis is the production of the intermediate 2,4,6-octatrienoic acid by the highly redusing polyketide synthase alnA with cleavage of the PKS product by the esterase alnB. 2,4,6-octatrienoic acid is further converted to asperlin via several steps involving the remaining enzymes from the cluster. This Emericella nidulans (strain FGSC A4 / ATCC 38163 / CBS 112.46 / NRRL 194 / M139) (Aspergillus nidulans) protein is Cytochrome P450 monooxygenase alnD.